A 219-amino-acid polypeptide reads, in one-letter code: Ribose-5-phosphate isomerase A (219 aa).

Substrate-binding positions include 28–31 (TGST), 81–84 (DGAD), and 94–97 (KGGG). Residue glutamate 103 is the Proton acceptor of the active site. Lysine 121 serves as a coordination point for substrate.

This sequence belongs to the ribose 5-phosphate isomerase family. Homodimer.

The enzyme catalyses aldehydo-D-ribose 5-phosphate = D-ribulose 5-phosphate. The protein operates within carbohydrate degradation; pentose phosphate pathway; D-ribose 5-phosphate from D-ribulose 5-phosphate (non-oxidative stage): step 1/1. Functionally, catalyzes the reversible conversion of ribose-5-phosphate to ribulose 5-phosphate. This Shewanella loihica (strain ATCC BAA-1088 / PV-4) protein is Ribose-5-phosphate isomerase A.